The following is a 440-amino-acid chain: Ribosomal protein uS12 methylthiotransferase RimO (440 aa).

Residues 5-116 enclose the MTTase N-terminal domain; that stretch reads PTIAISHLGC…IVSVIERAEQ (112 aa). [4Fe-4S] cluster-binding residues include C14, C50, C79, C154, C158, and C161. In terms of domain architecture, Radical SAM core spans 140–370; that stretch reads TTTEGVAYLR…ALQQPISWRK (231 aa). The TRAM domain maps to 372–438; the sequence is QQEVGKTVEV…EYDLFGQVVS (67 aa).

The protein belongs to the methylthiotransferase family. RimO subfamily. [4Fe-4S] cluster serves as cofactor.

The protein resides in the cytoplasm. It catalyses the reaction L-aspartate(89)-[ribosomal protein uS12]-hydrogen + (sulfur carrier)-SH + AH2 + 2 S-adenosyl-L-methionine = 3-methylsulfanyl-L-aspartate(89)-[ribosomal protein uS12]-hydrogen + (sulfur carrier)-H + 5'-deoxyadenosine + L-methionine + A + S-adenosyl-L-homocysteine + 2 H(+). Catalyzes the methylthiolation of an aspartic acid residue of ribosomal protein uS12. This chain is Ribosomal protein uS12 methylthiotransferase RimO, found in Nostoc sp. (strain PCC 7120 / SAG 25.82 / UTEX 2576).